A 59-amino-acid chain; its full sequence is Large ribosomal subunit protein uL30 (59 aa).

The protein belongs to the universal ribosomal protein uL30 family. In terms of assembly, part of the 50S ribosomal subunit.

In Staphylococcus haemolyticus (strain JCSC1435), this protein is Large ribosomal subunit protein uL30.